Here is a 208-residue protein sequence, read N- to C-terminus: Protein-L-isoaspartate O-methyltransferase (208 aa).

Residue Ser59 is part of the active site.

This sequence belongs to the methyltransferase superfamily. L-isoaspartyl/D-aspartyl protein methyltransferase family.

The protein resides in the cytoplasm. The enzyme catalyses [protein]-L-isoaspartate + S-adenosyl-L-methionine = [protein]-L-isoaspartate alpha-methyl ester + S-adenosyl-L-homocysteine. Catalyzes the methyl esterification of L-isoaspartyl residues in peptides and proteins that result from spontaneous decomposition of normal L-aspartyl and L-asparaginyl residues. It plays a role in the repair and/or degradation of damaged proteins. The polypeptide is Protein-L-isoaspartate O-methyltransferase (Citrobacter koseri (strain ATCC BAA-895 / CDC 4225-83 / SGSC4696)).